Reading from the N-terminus, the 153-residue chain is Transthyretin (153 aa).

The signal sequence occupies residues 1–19 (MASFKSFLLLALLAIVSEA). Cys-34 is modified (sulfocysteine). Residues Lys-39 and Glu-78 each contribute to the L-thyroxine site. An N-linked (GlcNAc...) asparagine glycan is attached at Asn-81. Ser-141 contacts L-thyroxine.

Belongs to the transthyretin family. Homotetramer. Dimer of dimers. In the homotetramer, subunits assemble around a central channel that can accommodate two ligand molecules. Interacts with rbp4. Post-translationally, sulfonation of the reactive cysteine Cys-34 enhances the stability of the native conformation of TTR, avoiding misassembly of the protein leading to amyloid formation. In terms of tissue distribution, detected in plasma (at protein level). Expressed during metamorphosis in tadpole liver, but not in tadpole brain nor adult liver. Between 1.5 and 3 days of development, also expressed in the mesoderm of the kidney.

It localises to the secreted. Thyroid hormone-binding protein, with a much higher binding affinity for triiodothyronine (T3) than for thyroxine (T4). Probably transports triiodothyronine from the bloodstream to the brain. This is Transthyretin (ttr) from Xenopus laevis (African clawed frog).